The following is a 363-amino-acid chain: Dual-specificity RNA methyltransferase RlmN (363 aa).

The active-site Proton acceptor is Glu102. Positions 108–349 (EKKRATLCVS…KNRGQDIGAA (242 aa)) constitute a Radical SAM core domain. A disulfide bridge connects residues Cys115 and Cys350. Cys122, Cys126, and Cys129 together coordinate [4Fe-4S] cluster. S-adenosyl-L-methionine contacts are provided by residues 174-175 (GE), Ser206, 228-230 (SLH), and Asn307. Cys350 (S-methylcysteine intermediate) is an active-site residue.

The protein belongs to the radical SAM superfamily. RlmN family. [4Fe-4S] cluster serves as cofactor.

It localises to the cytoplasm. The catalysed reaction is adenosine(2503) in 23S rRNA + 2 reduced [2Fe-2S]-[ferredoxin] + 2 S-adenosyl-L-methionine = 2-methyladenosine(2503) in 23S rRNA + 5'-deoxyadenosine + L-methionine + 2 oxidized [2Fe-2S]-[ferredoxin] + S-adenosyl-L-homocysteine. It carries out the reaction adenosine(37) in tRNA + 2 reduced [2Fe-2S]-[ferredoxin] + 2 S-adenosyl-L-methionine = 2-methyladenosine(37) in tRNA + 5'-deoxyadenosine + L-methionine + 2 oxidized [2Fe-2S]-[ferredoxin] + S-adenosyl-L-homocysteine. Functionally, specifically methylates position 2 of adenine 2503 in 23S rRNA and position 2 of adenine 37 in tRNAs. m2A2503 modification seems to play a crucial role in the proofreading step occurring at the peptidyl transferase center and thus would serve to optimize ribosomal fidelity. The protein is Dual-specificity RNA methyltransferase RlmN of Buchnera aphidicola subsp. Schizaphis graminum (strain Sg).